A 456-amino-acid polypeptide reads, in one-letter code: Cysteine--tRNA ligase (456 aa).

C29 serves as a coordination point for Zn(2+). The 'HIGH' region signature appears at 31–41 (VTVYDYCHVGH). C210, H235, and E239 together coordinate Zn(2+). Positions 267 to 271 (KMSKS) match the 'KMSKS' region motif. K270 contributes to the ATP binding site.

This sequence belongs to the class-I aminoacyl-tRNA synthetase family. Monomer. Zn(2+) is required as a cofactor.

The protein localises to the cytoplasm. The catalysed reaction is tRNA(Cys) + L-cysteine + ATP = L-cysteinyl-tRNA(Cys) + AMP + diphosphate. The chain is Cysteine--tRNA ligase from Hydrogenovibrio crunogenus (strain DSM 25203 / XCL-2) (Thiomicrospira crunogena).